We begin with the raw amino-acid sequence, 245 residues long: Geranylgeranylglyceryl phosphate synthase (245 aa).

Mg(2+) contacts are provided by D24 and S54. Residues 172–178, 203–204, and 225–226 contribute to the sn-glycerol 1-phosphate site; these read YLEAGSG, GG, and GT.

The protein belongs to the GGGP/HepGP synthase family. Group II subfamily. Requires Mg(2+) as cofactor.

It is found in the cytoplasm. It carries out the reaction sn-glycerol 1-phosphate + (2E,6E,10E)-geranylgeranyl diphosphate = sn-3-O-(geranylgeranyl)glycerol 1-phosphate + diphosphate. It functions in the pathway membrane lipid metabolism; glycerophospholipid metabolism. In terms of biological role, prenyltransferase that catalyzes the transfer of the geranylgeranyl moiety of geranylgeranyl diphosphate (GGPP) to the C3 hydroxyl of sn-glycerol-1-phosphate (G1P). This reaction is the first ether-bond-formation step in the biosynthesis of archaeal membrane lipids. This Staphylothermus marinus (strain ATCC 43588 / DSM 3639 / JCM 9404 / F1) protein is Geranylgeranylglyceryl phosphate synthase.